The chain runs to 456 residues: UDP-N-acetylmuramoylalanine--D-glutamate ligase (456 aa).

An ATP-binding site is contributed by Gly-113–Thr-119.

It belongs to the MurCDEF family.

The protein localises to the cytoplasm. The enzyme catalyses UDP-N-acetyl-alpha-D-muramoyl-L-alanine + D-glutamate + ATP = UDP-N-acetyl-alpha-D-muramoyl-L-alanyl-D-glutamate + ADP + phosphate + H(+). Its pathway is cell wall biogenesis; peptidoglycan biosynthesis. Functionally, cell wall formation. Catalyzes the addition of glutamate to the nucleotide precursor UDP-N-acetylmuramoyl-L-alanine (UMA). In Crocosphaera subtropica (strain ATCC 51142 / BH68) (Cyanothece sp. (strain ATCC 51142)), this protein is UDP-N-acetylmuramoylalanine--D-glutamate ligase.